A 186-amino-acid chain; its full sequence is MALNLKINRQIRAPKVRLIGSSGEQLGILNTKDALDLAREADLDLVEVASNSEPPVCKIMDYGKYRYDLTKKEKDSKKAQHQVRIKEVKLKPNIDEGDFSTKLKQARAFIEKGNKVKITCMFRGRELAYPEHGHRVVQKMSQGLEDIGFMESEPKLNGRSLICVMAPGTVKTKKKQDKINAQDEKQ.

It belongs to the IF-3 family. As to quaternary structure, monomer.

It is found in the cytoplasm. In terms of biological role, IF-3 binds to the 30S ribosomal subunit and shifts the equilibrium between 70S ribosomes and their 50S and 30S subunits in favor of the free subunits, thus enhancing the availability of 30S subunits on which protein synthesis initiation begins. The polypeptide is Translation initiation factor IF-3 (Chlamydia caviae (strain ATCC VR-813 / DSM 19441 / 03DC25 / GPIC) (Chlamydophila caviae)).